A 370-amino-acid polypeptide reads, in one-letter code: Glutamate 5-kinase (370 aa).

Lysine 13 is an ATP binding site. The substrate site is built by serine 52, aspartate 139, and asparagine 151. ATP contacts are provided by residues 171–172 and 211–217; these read SD and SGGMKSK. The PUA domain occupies 275–353; that stretch reads KGELVLDRGA…AEIEAVLGYR (79 aa).

The protein belongs to the glutamate 5-kinase family.

The protein resides in the cytoplasm. The enzyme catalyses L-glutamate + ATP = L-glutamyl 5-phosphate + ADP. Its pathway is amino-acid biosynthesis; L-proline biosynthesis; L-glutamate 5-semialdehyde from L-glutamate: step 1/2. In terms of biological role, catalyzes the transfer of a phosphate group to glutamate to form L-glutamate 5-phosphate. The chain is Glutamate 5-kinase from Thermus thermophilus (strain ATCC BAA-163 / DSM 7039 / HB27).